The primary structure comprises 302 residues: Nucleotide-binding protein Bcep18194_A6125 (302 aa).

Residue 8-15 participates in ATP binding; the sequence is GISGSGKS. 57 to 60 contributes to the GTP binding site; that stretch reads DARS.

This sequence belongs to the RapZ-like family.

Displays ATPase and GTPase activities. This chain is Nucleotide-binding protein Bcep18194_A6125, found in Burkholderia lata (strain ATCC 17760 / DSM 23089 / LMG 22485 / NCIMB 9086 / R18194 / 383).